A 219-amino-acid polypeptide reads, in one-letter code: Thymidylate kinase (219 aa).

9 to 16 (GIEGSGKT) is an ATP binding site.

The protein belongs to the thymidylate kinase family.

It carries out the reaction dTMP + ATP = dTDP + ADP. Functionally, phosphorylation of dTMP to form dTDP in both de novo and salvage pathways of dTTP synthesis. This Pelobacter propionicus (strain DSM 2379 / NBRC 103807 / OttBd1) protein is Thymidylate kinase.